The primary structure comprises 329 residues: Beta-ketoacyl-[acyl-carrier-protein] synthase III (329 aa).

Active-site residues include C123 and H256. Residues 257–261 (QANIR) are ACP-binding. The active site involves N286.

This sequence belongs to the thiolase-like superfamily. FabH family. In terms of assembly, homodimer.

It localises to the cytoplasm. The catalysed reaction is malonyl-[ACP] + acetyl-CoA + H(+) = 3-oxobutanoyl-[ACP] + CO2 + CoA. It participates in lipid metabolism; fatty acid biosynthesis. Catalyzes the condensation reaction of fatty acid synthesis by the addition to an acyl acceptor of two carbons from malonyl-ACP. Catalyzes the first condensation reaction which initiates fatty acid synthesis and may therefore play a role in governing the total rate of fatty acid production. Possesses both acetoacetyl-ACP synthase and acetyl transacylase activities. Its substrate specificity determines the biosynthesis of branched-chain and/or straight-chain of fatty acids. This Paraburkholderia phymatum (strain DSM 17167 / CIP 108236 / LMG 21445 / STM815) (Burkholderia phymatum) protein is Beta-ketoacyl-[acyl-carrier-protein] synthase III.